A 215-amino-acid chain; its full sequence is Orotate phosphoribosyltransferase (215 aa).

Lysine 26 is a 5-phospho-alpha-D-ribose 1-diphosphate binding site. Residue 34–35 (FF) coordinates orotate. 5-phospho-alpha-D-ribose 1-diphosphate is bound by residues 72–73 (YK), arginine 99, lysine 100, lysine 103, histidine 105, and 124–132 (DDVITAGTA). Residues threonine 128 and arginine 156 each contribute to the orotate site.

Belongs to the purine/pyrimidine phosphoribosyltransferase family. PyrE subfamily. Homodimer. It depends on Mg(2+) as a cofactor.

The catalysed reaction is orotidine 5'-phosphate + diphosphate = orotate + 5-phospho-alpha-D-ribose 1-diphosphate. Its pathway is pyrimidine metabolism; UMP biosynthesis via de novo pathway; UMP from orotate: step 1/2. Catalyzes the transfer of a ribosyl phosphate group from 5-phosphoribose 1-diphosphate to orotate, leading to the formation of orotidine monophosphate (OMP). The chain is Orotate phosphoribosyltransferase from Hahella chejuensis (strain KCTC 2396).